The sequence spans 202 residues: Pectinesterase inhibitor 11 (202 aa).

The signal sequence occupies residues 1–21; it reads MAKQIFYTLFLFLLSTAILTA. An intrachain disulfide couples Cys43 to Cys52. Asn76 carries N-linked (GlcNAc...) asparagine glycosylation. Cysteines 109 and 160 form a disulfide.

The protein belongs to the PMEI family.

It localises to the secreted. The protein localises to the extracellular space. It is found in the apoplast. Functionally, pectin methylesterase (PME) inhibitor involved in the maintenance of cell wall integrity in response to necrotrophic pathogens. Modulates PME activity and pectin methylesterification during infection by Botrytis cinerea and contributes to resistance against the pathogen. The chain is Pectinesterase inhibitor 11 from Arabidopsis thaliana (Mouse-ear cress).